The chain runs to 107 residues: Nucleoid-associated protein A1E_05550 (107 aa).

The protein belongs to the YbaB/EbfC family. In terms of assembly, homodimer.

It localises to the cytoplasm. Its subcellular location is the nucleoid. Its function is as follows. Binds to DNA and alters its conformation. May be involved in regulation of gene expression, nucleoid organization and DNA protection. This chain is Nucleoid-associated protein A1E_05550, found in Rickettsia canadensis (strain McKiel).